The sequence spans 992 residues: MKGLGDSRPRHLSDSLDPPHEPLFAGTDRNPYLLSPTEAFAREARFPGQNTLPGDGLFPLNNQLPPPSSTFPRIHYNSHFEVPEESPFPSHAQATKINRLPANLLDQFEKQLPIHRDGFSTLQFPRGEAKARGESPGRIRHLVHSVQRLFFTKAPSLEGTAGKVGGNGSKKGGMEDGKGRRAKSKERAKAGEPKRRSRSNISGWWSSDDNLDGEAGAFRSSGPASGLMTLGRQAERSQPRYFMHAYNTISGHMLKTTKNNTTELTAPPPPPAPPATCPSLGVGTDTNYVKRGSWSTLTLSHAHEVCQKTSATLDKSLLKSKSCHQGLAYHYLQVPGGGGEWSTTLLSPRETDAAAEGPIPCRRMRSGSYIKAMGDEDSDESGGSPKPSPKTAARRQSYLRATQQSLGEQSNPRRSLDRLDSVDMLLPSKCPSWEEDYTPVSDSLNDSSCISQIFGQASLIPQLFGHEQQVREAELSDQYEAACESACSEAESTAAETLDLPLPSYFRSRSHSYLRAIQAGCSQEEDSVSLQSLSPPPSTGSLSNSRTLPSSSCLVAYKKTPPPVPPRTTSKPFISVTVQSSTESAQDTYLDSQDHKSEVTSQSGLSNSSDSLDSSTRPPSVTRGGVAPAPEAPEPPPKHAALKSEQGTLTSSESHPEAAPKRKLSSIGIQVDCIQPVPKEEPSPATKFQSIGVQVEDDWRSSVPSHSMSSRRDTDSDTQDANDSSCKSSERSLPDCTPHPNSISIDAGPRQAPKIAQIKRNLSYGDNSDPALEASSLPPPDPWLETSSSSPAEPAQPGACRRDGYWFLKLLQAETERLEGWCCQMDKETKENNLSEEVLGKVLSAVGSAQLLMSQKFQQFRGLCEQNLNPDANPRPTAQDLAGFWDLLQLSIEDISMKFDELYHLKANSWQLVETPEKRKEEKKPPPPVPKKPAKSKPAVSRDKASDASDKQRQEARKRLLAAKRAASVRQNSATESADSIEIYVPEAQTRL.

Basic and acidic residues predominate over residues 1–20 (MKGLGDSRPRHLSDSLDPPH). Disordered stretches follow at residues 1-30 (MKGL…TDRN), 47-66 (PGQN…QLPP), and 157-206 (LEGT…GWWS). The span at 162–171 (GKVGGNGSKK) shows a compositional bias: gly residues. Positions 172 to 194 (GGMEDGKGRRAKSKERAKAGEPK) are enriched in basic and acidic residues. Ser206 and Ser207 each carry phosphoserine. Arg291 is modified (omega-N-methylarginine). The disordered stretch occupies residues 342-396 (STTLLSPRETDAAAEGPIPCRRMRSGSYIKAMGDEDSDESGGSPKPSPKTAARRQ). 6 positions are modified to phosphoserine: Ser378, Ser381, Ser388, Ser405, Ser415, and Ser421. Disordered regions lie at residues 527–751 (SVSL…GPRQ), 763–798 (SYGD…AQPG), and 915–992 (TPEK…QTRL). Residues 528-554 (VSLQSLSPPPSTGSLSNSRTLPSSSCL) are compositionally biased toward low complexity. Over residues 576–591 (VTVQSSTESAQDTYLD) the composition is skewed to polar residues. Phosphoserine is present on residues Ser580, Ser581, Ser609, Ser611, Ser665, and Ser744. Residues 600–620 (TSQSGLSNSSDSLDSSTRPPS) show a composition bias toward low complexity. Thr915 carries the post-translational modification Phosphothreonine. 2 stretches are compositionally biased toward basic and acidic residues: residues 915 to 925 (TPEKRKEEKKP) and 940 to 958 (VSRD…EARK). Positions 969–978 (VRQNSATESA) are enriched in polar residues. The residue at position 973 (Ser973) is a Phosphoserine.

It belongs to the SAPAP family. As to quaternary structure, interacts with DLG1 and DLG4/PSD-95.

It is found in the membrane. Its function is as follows. May play a role in the molecular organization of synapses and neuronal cell signaling. Could be an adapter protein linking ion channel to the subsynaptic cytoskeleton. May induce enrichment of PSD-95/SAP90 at the plasma membrane. This is Disks large-associated protein 4 (DLGAP4) from Homo sapiens (Human).